A 161-amino-acid polypeptide reads, in one-letter code: 2-C-methyl-D-erythritol 2,4-cyclodiphosphate synthase (161 aa).

A divalent metal cation-binding residues include Asp-10 and His-12. 4-CDP-2-C-methyl-D-erythritol 2-phosphate-binding positions include 10 to 12 (DVH) and 36 to 37 (HS). Residue His-44 coordinates a divalent metal cation. 4-CDP-2-C-methyl-D-erythritol 2-phosphate contacts are provided by residues 58–60 (DIG), 63–67 (FSDTD), and Arg-144.

Belongs to the IspF family. In terms of assembly, homotrimer. A divalent metal cation is required as a cofactor.

The catalysed reaction is 4-CDP-2-C-methyl-D-erythritol 2-phosphate = 2-C-methyl-D-erythritol 2,4-cyclic diphosphate + CMP. It functions in the pathway isoprenoid biosynthesis; isopentenyl diphosphate biosynthesis via DXP pathway; isopentenyl diphosphate from 1-deoxy-D-xylulose 5-phosphate: step 4/6. Functionally, involved in the biosynthesis of isopentenyl diphosphate (IPP) and dimethylallyl diphosphate (DMAPP), two major building blocks of isoprenoid compounds. Catalyzes the conversion of 4-diphosphocytidyl-2-C-methyl-D-erythritol 2-phosphate (CDP-ME2P) to 2-C-methyl-D-erythritol 2,4-cyclodiphosphate (ME-CPP) with a corresponding release of cytidine 5-monophosphate (CMP). In Burkholderia lata (strain ATCC 17760 / DSM 23089 / LMG 22485 / NCIMB 9086 / R18194 / 383), this protein is 2-C-methyl-D-erythritol 2,4-cyclodiphosphate synthase.